A 123-amino-acid polypeptide reads, in one-letter code: DNA-directed RNA polymerase I subunit RPA12 (123 aa).

6 residues coordinate Zn(2+): Cys17, Cys20, Cys35, Cys38, Cys84, and Cys87. The C4-type zinc-finger motif lies at 17–38; the sequence is CPDCGSVLPLPGVQDTVICPRC. The TFIIS-type zinc finger occupies 80-120; the sequence is VDRRCSRCGHEGMAYYTRQMRSADEGQTVFYTCINCKFQEK. A Hairpin motif is present at residues 103–104; it reads DE. 2 residues coordinate Zn(2+): Cys112 and Cys115.

This sequence belongs to the archaeal RpoM/eukaryotic RPA12/RPB9/RPC11 RNA polymerase family. Component of the RNA polymerase I (Pol I) complex consisting of 13 subunits: a ten-subunit catalytic core composed of POLR1A/RPA1, POLR1B/RPA2, POLR1C/RPAC1, POLR1D/RPAC2, POLR1H/RPA12, POLR2E/RPABC1, POLR2F/RPABC2, POLR2H/RPABC3, POLR2K/RPABC4 and POLR2L/RPABC5; a mobile stalk subunit POLR1F/RPA43 protruding from the core and additional subunits homologous to general transcription factors POLR1E/RPA49 and POLR1G/RPA34. Part of Pol I pre-initiation complex (PIC), in which Pol I core assembles with RRN3 and promoter-bound UTBF and SL1/TIF-IB complex.

It is found in the nucleus. The protein localises to the nucleolus. Core component of RNA polymerase I (Pol I), a DNA-dependent RNA polymerase which synthesizes ribosomal RNA precursors using the four ribonucleoside triphosphates as substrates. Can mediate Pol I proofreading of the nascent RNA transcript. Anchors into the Pol I active site to monitor transcription fidelity and cleave mis-incorporated 5'-ribonucleotides. The chain is DNA-directed RNA polymerase I subunit RPA12 from Rattus norvegicus (Rat).